Consider the following 350-residue polypeptide: Core protein VP7 (350 aa).

An N-linked (GlcNAc...) asparagine; by host glycan is attached at asparagine 45.

Belongs to the orbivirus VP7 family. In terms of assembly, homotrimer.

It localises to the virion. Functionally, major structural core protein; binds to structural protein VP3. Constitutes the surface of the AHSV core. The protein is Core protein VP7 (Segment-7) of African horse sickness virus (AHSV).